A 393-amino-acid chain; its full sequence is MERSISFNPRGDNELPDDRSSDVGYAANDRRLAYSRSFQQSHGPRTPAVTEAAKPFLDRTVSSIDMPPDIYSVDGSDVFFGEGKDVDMAKVSVLEMVWEVFGVVTSGNRQMKRLFLLIALNVLYSTTELSIGIFTGRVGLVSDAFHLTFGCGLLTFSLFAMATSRKKPDHAYSYGYKRLEVLSAFTNALFLMFMSFSLAVEALHAFIQDESEHKHYLIVSAVTNLLVNLLGVWFFRNYARVNIAYRKAEDMNYHSVCLHVISDSIRSAGLILASWLLSLGVENAEVLCLGLVSVTVFMLVMPLFKATGGVLLQMAPPNIPSSALSKCLRQITSREDVTEVLQARFWEVVPGHTVGSLRLQVKSGIDERPLLQYVYDVYHDLGVQDLTLQTDYT.

A disordered region spans residues 1 to 23 (MERSISFNPRGDNELPDDRSSDV). At 1 to 113 (MERSISFNPR…VTSGNRQMKR (113 aa)) the chain is on the cytoplasmic side. Basic and acidic residues predominate over residues 11 to 21 (GDNELPDDRSS). The helical transmembrane segment at 114–134 (LFLLIALNVLYSTTELSIGIF) threads the bilayer. Over 135–139 (TGRVG) the chain is Vacuolar. A helical transmembrane segment spans residues 140-160 (LVSDAFHLTFGCGLLTFSLFA). At 161-186 (MATSRKKPDHAYSYGYKRLEVLSAFT) the chain is on the cytoplasmic side. A helical membrane pass occupies residues 187 to 207 (NALFLMFMSFSLAVEALHAFI). Over 208-214 (QDESEHK) the chain is Vacuolar. Residues 215–235 (HYLIVSAVTNLLVNLLGVWFF) form a helical membrane-spanning segment. Residues 236–259 (RNYARVNIAYRKAEDMNYHSVCLH) are Cytoplasmic-facing. Residues 260–280 (VISDSIRSAGLILASWLLSLG) form a helical membrane-spanning segment. Residues 281 to 283 (VEN) lie on the Vacuolar side of the membrane. The helical transmembrane segment at 284 to 304 (AEVLCLGLVSVTVFMLVMPLF) threads the bilayer. Topologically, residues 305-393 (KATGGVLLQM…QDLTLQTDYT (89 aa)) are cytoplasmic.

The protein belongs to the cation diffusion facilitator (CDF) transporter (TC 2.A.4) family.

The protein localises to the vacuole membrane. Its function is as follows. Involved in sequestration of excess metal in the cytoplasm into vacuoles to maintain metal homeostasis. The polypeptide is Metal tolerance protein C2 (MTPC2) (Arabidopsis thaliana (Mouse-ear cress)).